The sequence spans 891 residues: MAASVEYNRQVSAHPWPTNAQPKAAFDLFSSSGGGRRRSGADSDSDDEDSVPPDWRSLYSPRLDVEPSVKDPRDEATSDAWVKRHPALVRLTGKHPFNSEPPLPRLMSHGFITPVPLHYVRNHGAVPKADWSTWTVEVTGLVKRPVKFTMEELVTGFQAVEFPVTLVCAGNRRKEQNMVRQSSGFNWGPGAISTTVWRGVRLRDVLRRCGVMGAGAASNVCFEGAEDLPGGGGCKYGTSLRRSVAMDPARDVILAYMQNGEPLAPDHGFPVRVIVPGFIGGRMVKWLKRIVVACNESESYYHYRDNRVLPSHVDAELANAEAWWYKPECMINELNINSVITTPGHDEVLPINALTTQKPYTMKGYAYSGGGRKVTRVEVTLDGGETWQVCDLEHPERPTKYGKYWCWCFWSVEVEVLELLGAKEMAVRAWDEALNTQPERLIWNLMGMMNNCWFRVKINVCRPHKGEIGLVFDHPTQPGNQSGGWMARQKHIETSETTQGTLKRSTSTPFMSTASAQFTMSEVRRHASKDSAWIVVHGHVYDCTAFLKDHPGGADSILINAGSDCTEEFDAIHSAKARGLLEMYRVGELIVTGNDYSPQSSNADLAAIVEAPAVVVPRLPASAVALANPREKVRCRLVDKKSMSHNVRLFRFALPSPDQKLGLPVGKHVYVCASTGGKLCMRAYTPTSSVEEVGHVELLIKIYFKDEDPKFPAGGLMSQYLDALPLGAPVDIKGPVGHIEYAGRGAFTVGGERRFARRLAMVAGGTGITPVYQVIQAVLRDQPDDTTEMHLVYANRTEDDMLLREEIDRWAAANPARLKVWYVVSKVGRPEDAWEYGVGRVDEQVLREHLPLGGDGETLALVCGPPAMLECTVRPGLEKMGYDLDKDCLVF.

The tract at residues 1–78 is disordered; that stretch reads MAASVEYNRQ…VKDPRDEATS (78 aa). Residues 63–76 show a composition bias toward basic and acidic residues; that stretch reads LDVEPSVKDPRDEA. C168 contacts Mo-molybdopterin. A Cytochrome b5 heme-binding domain is found at 515-590; that stretch reads SAQFTMSEVR…LEMYRVGELI (76 aa). Heme is bound by residues H550 and H573. The 113-residue stretch at 630–742 folds into the FAD-binding FR-type domain; that stretch reads REKVRCRLVD…KGPVGHIEYA (113 aa). FAD contacts are provided by residues 682–685, 699–703, F704, F711, 716–718, and T769; these read RAYT, LIKIY, and LMS.

The protein belongs to the nitrate reductase family. In terms of assembly, homodimer. FAD serves as cofactor. The cofactor is heme. Mo-molybdopterin is required as a cofactor.

It catalyses the reaction nitrite + NAD(+) + H2O = nitrate + NADH + H(+). The catalysed reaction is nitrite + NADP(+) + H2O = nitrate + NADPH + H(+). Its function is as follows. Nitrate reductase is a key enzyme involved in the first step of nitrate assimilation in plants, fungi and bacteria. The protein is Nitrate reductase [NAD(P)H] (NAR-7) of Hordeum vulgare (Barley).